We begin with the raw amino-acid sequence, 328 residues long: Homeobox protein DLX-2 (328 aa).

Polar residues-rich tracts occupy residues 16–28 (QIAA…QHQQ) and 52–72 (ESPT…NQQH). 3 disordered regions span residues 16-81 (QIAA…GGGG), 211-270 (WKSG…SSPS), and 300-328 (LHPT…GTIF). The homeobox DNA-binding region spans 152–211 (VRKPRTIYSSFQLAALQRRFQKTQYLALPERAELAASLGLTQTQVKIWFQNRRSKFKKMW). Ser232 bears the Phosphoserine mark. The span at 250–264 (AGGGGPGSGGSGAGS) shows a compositional bias: gly residues.

Belongs to the distal-less homeobox family. Interacts (via homeobox DNA-binding domain) with POU4F2; this interaction enhances retinal ganglion cell (RGC) differentiation.

Its subcellular location is the nucleus. Acts as a transcriptional activator. Activates transcription of CGA/alpha-GSU, via binding to the downstream activin regulatory element (DARE) in the gene promoter. Plays a role in terminal differentiation of interneurons, such as amacrine and bipolar cells in the developing retina. Likely to play a regulatory role in the development of the ventral forebrain. May play a role in craniofacial patterning and morphogenesis. This is Homeobox protein DLX-2 (DLX2) from Homo sapiens (Human).